The following is a 593-amino-acid chain: NADH-quinone oxidoreductase subunit C/D (593 aa).

Residues 1–184 (MTADNAIFIP…DPYSLTLAKQ (184 aa)) are NADH dehydrogenase I subunit C. Positions 208–593 (DYMFLNLGPN…IDFVMADVDR (386 aa)) are NADH dehydrogenase I subunit D.

The protein in the N-terminal section; belongs to the complex I 30 kDa subunit family. In the C-terminal section; belongs to the complex I 49 kDa subunit family. NDH-1 is composed of 13 different subunits. Subunits NuoB, CD, E, F, and G constitute the peripheral sector of the complex.

The protein localises to the cell inner membrane. The enzyme catalyses a quinone + NADH + 5 H(+)(in) = a quinol + NAD(+) + 4 H(+)(out). Its function is as follows. NDH-1 shuttles electrons from NADH, via FMN and iron-sulfur (Fe-S) centers, to quinones in the respiratory chain. The immediate electron acceptor for the enzyme in this species is believed to be ubiquinone. Couples the redox reaction to proton translocation (for every two electrons transferred, four hydrogen ions are translocated across the cytoplasmic membrane), and thus conserves the redox energy in a proton gradient. This chain is NADH-quinone oxidoreductase subunit C/D, found in Pseudomonas putida (strain ATCC 47054 / DSM 6125 / CFBP 8728 / NCIMB 11950 / KT2440).